We begin with the raw amino-acid sequence, 513 residues long: Activin receptor type-2A (513 aa).

The first 19 residues, 1–19 (MGAAAKLAFAVFLISCSSG), serve as a signal peptide directing secretion. The Extracellular segment spans residues 20–135 (AILGRSETQE…TSNPVTPKPP (116 aa)). 5 disulfide bridges follow: Cys-30/Cys-60, Cys-50/Cys-78, Cys-85/Cys-104, Cys-91/Cys-103, and Cys-105/Cys-110. Asn-43 and Asn-66 each carry an N-linked (GlcNAc...) asparagine glycan. A helical transmembrane segment spans residues 136–161 (YYNILLYSLVPLMLIAGIVICAFWVY). The Cytoplasmic segment spans residues 162–513 (RHHKMAYPPV…VDFPPKESSL (352 aa)). One can recognise a Protein kinase domain in the interval 192–485 (LQLLEVKARG…GERITQMQRL (294 aa)). ATP contacts are provided by residues 198–206 (KARGRFGCV) and Lys-219. The active-site Proton acceptor is Asp-322.

Belongs to the protein kinase superfamily. TKL Ser/Thr protein kinase family. TGFB receptor subfamily. In terms of assembly, part of a complex consisting of MAGI2/ARIP1, ACVR2A, ACVR1B and SMAD3. Interacts with MAGI2/ARIP1. Interacts with type I receptor ACVR1. Interacts with BMP7. Interacts with TSC22D1/TSC-22. Interacts with activin A/INHBA. Mg(2+) is required as a cofactor. The cofactor is Mn(2+).

The protein resides in the cell membrane. It catalyses the reaction L-threonyl-[receptor-protein] + ATP = O-phospho-L-threonyl-[receptor-protein] + ADP + H(+). The enzyme catalyses L-seryl-[receptor-protein] + ATP = O-phospho-L-seryl-[receptor-protein] + ADP + H(+). On ligand binding, forms a receptor complex consisting of two type II and two type I transmembrane serine/threonine kinases. Type II receptors phosphorylate and activate type I receptors which autophosphorylate, then bind and activate SMAD transcriptional regulators. Receptor for activin A, activin B and inhibin A. Mediates induction of adipogenesis by GDF6. In Bos taurus (Bovine), this protein is Activin receptor type-2A (ACVR2A).